Consider the following 155-residue polypeptide: Ribosomal RNA large subunit methyltransferase H (155 aa).

S-adenosyl-L-methionine-binding positions include Leu72, Gly104, and 123–128 (LSRMTF).

This sequence belongs to the RNA methyltransferase RlmH family. As to quaternary structure, homodimer.

It localises to the cytoplasm. It carries out the reaction pseudouridine(1915) in 23S rRNA + S-adenosyl-L-methionine = N(3)-methylpseudouridine(1915) in 23S rRNA + S-adenosyl-L-homocysteine + H(+). Its function is as follows. Specifically methylates the pseudouridine at position 1915 (m3Psi1915) in 23S rRNA. The chain is Ribosomal RNA large subunit methyltransferase H from Kosmotoga olearia (strain ATCC BAA-1733 / DSM 21960 / TBF 19.5.1).